A 330-amino-acid chain; its full sequence is Basic leucine zipper 2 (330 aa).

A disordered region spans residues 1-207; that stretch reads MAQLPPKIPT…NRQSAQRSRV (207 aa). The span at 21–34 shows a compositional bias: basic residues; sequence GHHHHAAHGHHHQR. Positions 45–56 are enriched in pro residues; the sequence is PLPPFPLPPPAP. 2 stretches are compositionally biased toward low complexity: residues 57–72 and 139–151; these read ANGG…QHQP and QPAA…SSPS. Over residues 155 to 166 the composition is skewed to basic and acidic residues; sequence SMNDEKQDKGET. The bZIP domain maps to 188–244; that stretch reads DPKRVKRILANRQSAQRSRVRKLQYISELERSVTSLQTEVSALSPRVAFLDHQRSLL. The basic motif stretch occupies residues 190-209; it reads KRVKRILANRQSAQRSRVRK. Residues 216 to 244 are leucine-zipper; that stretch reads LERSVTSLQTEVSALSPRVAFLDHQRSLL. The tract at residues 267 to 330 is disordered; the sequence is GGTEEGDREA…LVIGRDPDAL (64 aa).

As to expression, expressed in roots, shoots and panicles.

It is found in the nucleus. In terms of biological role, transcription regulator. The chain is Basic leucine zipper 2 (BZIP02) from Oryza sativa subsp. japonica (Rice).